The following is a 226-amino-acid chain: PKHD-type hydroxylase Pput_0892 (226 aa).

In terms of domain architecture, Fe2OG dioxygenase spans 78 to 178 (KVFPPLINCY…RYAAFFWTQS (101 aa)). Fe cation contacts are provided by His96, Asp98, and His159. A 2-oxoglutarate-binding site is contributed by Arg169.

Fe(2+) serves as cofactor. The cofactor is L-ascorbate.

In Pseudomonas putida (strain ATCC 700007 / DSM 6899 / JCM 31910 / BCRC 17059 / LMG 24140 / F1), this protein is PKHD-type hydroxylase Pput_0892.